The primary structure comprises 57 residues: Large ribosomal subunit protein bL33 (57 aa).

Belongs to the bacterial ribosomal protein bL33 family.

This Shewanella halifaxensis (strain HAW-EB4) protein is Large ribosomal subunit protein bL33.